The following is a 375-amino-acid chain: Ribosomal RNA large subunit methyltransferase F (375 aa).

Disordered stretches follow at residues 1–39 (MKNN…AAVK) and 262–281 (NQRK…GKPT). The segment covering 27-38 (AKPKRVKKKAAV) has biased composition (basic residues).

This sequence belongs to the methyltransferase superfamily. METTL16/RlmF family.

Its subcellular location is the cytoplasm. The catalysed reaction is adenosine(1618) in 23S rRNA + S-adenosyl-L-methionine = N(6)-methyladenosine(1618) in 23S rRNA + S-adenosyl-L-homocysteine + H(+). Functionally, specifically methylates the adenine in position 1618 of 23S rRNA. This is Ribosomal RNA large subunit methyltransferase F from Vibrio parahaemolyticus serotype O3:K6 (strain RIMD 2210633).